A 246-amino-acid chain; its full sequence is Probable H/ACA ribonucleoprotein complex subunit 1-like protein (246 aa).

Disordered regions lie at residues 1-61 (MSFR…GGYD) and 155-246 (PQVG…TKFD). RGG-box regions lie at residues 4–59 (RGGR…GRGG) and 161–223 (RGRG…RGRG). The span at 168–180 (RGGDRGRGGDRGR) shows a compositional bias: basic and acidic residues. A compositionally biased stretch (gly residues) spans 181-221 (GGFGGRGGGGGGFRGGSRGGFGGGDRGGFRGGRGGDFGGRG).

Belongs to the GAR1 family. As to quaternary structure, component of the small nucleolar ribonucleoprotein particle containing H/ACA-type snoRNAs (H/ACA snoRNPs).

The protein resides in the nucleus. It localises to the nucleolus. In terms of biological role, required for ribosome biogenesis. Part of a complex which catalyzes pseudouridylation of rRNA. This involves the isomerization of uridine such that the ribose is subsequently attached to C5, instead of the normal N1. Pseudouridine ('psi') residues may serve to stabilize the conformation of rRNAs. This is Probable H/ACA ribonucleoprotein complex subunit 1-like protein from Caenorhabditis briggsae.